The sequence spans 299 residues: Prolyl 4-hydroxylase 2 (299 aa).

The Cytoplasmic segment spans residues 1–5 (MSMSR). The helical; Signal-anchor for type II membrane protein transmembrane segment at 6-26 (LGLLLFVAILLVLLQSSTCLI) threads the bilayer. The Lumenal segment spans residues 27–299 (SSPSSIINPS…GNCRRSCKAC (273 aa)). The 126-residue stretch at 121–246 (NGEDLQVLRY…KWSATKWIHV (126 aa)) folds into the Fe2OG dioxygenase domain. Residues His139 and Asp141 each coordinate Fe cation. Asn165 carries N-linked (GlcNAc...) asparagine glycosylation. His227 is a binding site for Fe cation. Position 237 (Lys237) interacts with 2-oxoglutarate. N-linked (GlcNAc...) asparagine glycosylation is found at Asn258 and Asn263. In terms of domain architecture, ShKT spans 259-299 (CTDVNESCERWAVLGECGKNPEYMVGTPEIPGNCRRSCKAC). Disulfide bonds link Cys259-Cys299, Cys266-Cys292, and Cys275-Cys296.

It belongs to the P4HA family. The cofactor is Fe(2+). L-ascorbate serves as cofactor. As to expression, expressed in epidermal root hair cells (trichoblasts).

Its subcellular location is the endoplasmic reticulum membrane. The protein resides in the golgi apparatus membrane. It catalyses the reaction L-prolyl-[collagen] + 2-oxoglutarate + O2 = trans-4-hydroxy-L-prolyl-[collagen] + succinate + CO2. Catalyzes the post-translational formation of 4-hydroxyproline in -Xaa-Pro-Gly- sequences in proline-rich peptide sequences of plant glycoproteins and other proteins. Hydroxyprolines are important constituent of many plant cell wall glycoproteins such as extensins, hydroxyproline-rich glycoproteins, lectins and arabinogalactan proteins. Possesses high affinity for leucine-rich repeat and proline-rich extensins of root cell walls that are essential for root hair development. Hydroxyprolines define the subsequent O-glycosylation sites by arabinosyltransferases which elongate the O-arabinosides on extensins. Has low affinity for the substrates tested in vitro. The polypeptide is Prolyl 4-hydroxylase 2 (Arabidopsis thaliana (Mouse-ear cress)).